Consider the following 195-residue polypeptide: Protein hunchback (195 aa).

Disordered regions lie at residues 16 to 57 (SHHH…SHTN), 64 to 83 (LKQQ…QQPM), and 155 to 195 (LTPP…KYMA). A compositionally biased stretch (basic residues) spans 17 to 29 (HHHHHHHAHHSHH). 2 stretches are compositionally biased toward low complexity: residues 33-44 (SNSNSNASSPHQ) and 66-81 (QQQQ…QQQQ). The segment covering 176-195 (EPEKEHDLMSNSSEDMKYMA) has biased composition (basic and acidic residues).

This sequence belongs to the hunchback C2H2-type zinc-finger protein family.

It localises to the nucleus. In terms of biological role, gap class segmentation protein that controls development of head structures. This Drosophila dasycnemia (Fruit fly) protein is Protein hunchback (hb).